Here is a 177-residue protein sequence, read N- to C-terminus: Zinc metalloproteinase-disintegrin-like scutiarin (177 aa).

The Disintegrin domain occupies 1–63 (NPCCDAATCK…ECPADVFHKN (63 aa)). Intrachain disulfides connect Cys-3-Cys-26, Cys-17-Cys-23, Cys-22-Cys-48, Cys-35-Cys-55, Cys-42-Cys-74, Cys-67-Cys-79, Cys-86-Cys-136, Cys-101-Cys-147, Cys-114-Cys-124, and Cys-131-Cys-173. The D/ECD-tripeptide motif lies at 41-43 (ECD). Ca(2+) contacts are provided by Asp-43, Pro-44, Glu-46, Asp-58, and Val-59.

It belongs to the venom metalloproteinase (M12B) family. P-III subfamily. P-IIIa sub-subfamily. Monomer. It depends on Zn(2+) as a cofactor. Glycosylated. Expressed by the venom gland.

The protein localises to the secreted. Functionally, snake venom metalloproteinase that impairs hemostasis in the envenomed animal. The sequence is that of Zinc metalloproteinase-disintegrin-like scutiarin from Crotalus scutulatus scutulatus (Mojave rattlesnake).